The chain runs to 188 residues: Threonylcarbamoyl-AMP synthase (188 aa).

The YrdC-like domain maps to 3 to 188 (QLHPSDIKDI…RSGKILRNGQ (186 aa)).

The protein belongs to the SUA5 family. TsaC subfamily.

It is found in the cytoplasm. It catalyses the reaction L-threonine + hydrogencarbonate + ATP = L-threonylcarbamoyladenylate + diphosphate + H2O. Functionally, required for the formation of a threonylcarbamoyl group on adenosine at position 37 (t(6)A37) in tRNAs that read codons beginning with adenine. Catalyzes the conversion of L-threonine, HCO(3)(-)/CO(2) and ATP to give threonylcarbamoyl-AMP (TC-AMP) as the acyladenylate intermediate, with the release of diphosphate. In Shewanella baltica (strain OS195), this protein is Threonylcarbamoyl-AMP synthase.